Here is an 87-residue protein sequence, read N- to C-terminus: Putative autophagy-related protein 8E (87 aa).

Basic and acidic residues predominate over residues 1-14 (MEERRKEKGKEGRR). The interval 1-30 (MEERRKEKGKEGRRGKATGHSVDKFSRSNL) is disordered. The Phosphatidylethanolamine amidated glycine moiety is linked to residue G87.

This sequence belongs to the ATG8 family. In terms of assembly, interacts with ATG4. Post-translationally, the C-terminal Gly is amidated with phosphatidylethanolamine by an activating system similar to that for ubiquitin.

It localises to the cytoplasmic vesicle. The protein resides in the autophagosome membrane. The protein localises to the vacuole membrane. It is found in the cytoplasm. Its subcellular location is the cytoskeleton. Functionally, ubiquitin-like modifier involved in autophagosomes formation. May mediate the delivery of the autophagosomes to the vacuole via the microtubule cytoskeleton. The sequence is that of Putative autophagy-related protein 8E (ATG8E) from Oryza sativa subsp. japonica (Rice).